We begin with the raw amino-acid sequence, 540 residues long: Signal peptide peptidase-like 2 (540 aa).

A signal peptide spans 1-27 (MDSLRFLRILLLSSSILLLSLRSTVTA). At 28–196 (GDIVHQDNLA…PRRPAVDVAE (169 aa)) the chain is on the lumenal side. A glycan (N-linked (GlcNAc...) asparagine) is linked at Asn-83. One can recognise a PA domain in the interval 95 to 173 (SCTPLKNKLS…QDAGASLQKM (79 aa)). N-linked (GlcNAc...) asparagine glycosylation is present at Asn-176. A helical transmembrane segment spans residues 197–217 (VFLWLMAIGTILCASYWSAWS). Topologically, residues 218–248 (AREAAIEHDKLLKDAIDEIPNTNDGGSGVVE) are cytoplasmic. Residues 249-269 (INSISAIFFVVLASGFLVILY) form a helical membrane-spanning segment. The Lumenal segment spans residues 270–278 (KLMSYWFVE). Residues 279 to 299 (LLVVVFCIGGVEGLQTCLVAL) form a helical membrane-spanning segment. Residues 300-319 (LSRWFQRAADTYVKVPFLGP) lie on the Cytoplasmic side of the membrane. Residues 320–340 (ISYLTLAVSPFCIVFAVLWAV) traverse the membrane as a helical segment. The Lumenal segment spans residues 341–345 (YRVHS). Residues 346 to 366 (FAWIGQDVLGIALIITVLQIV) form a helical membrane-spanning segment. At 367–370 (HVPN) the chain is on the cytoplasmic side. A helical transmembrane segment spans residues 371-391 (LKVGTVLLSCAFLYDIFWVFV). Asp-385 is an active-site residue. Residues 392 to 429 (SKKLFHESVMIVVARGDKSGEDGIPMLLKIPRMFDPWG) are Lumenal-facing. The chain crosses the membrane as a helical span at residues 430–450 (GYSIIGFGDILLPGLLIAFAL). Asp-438 is a catalytic residue. Over 451 to 462 (RYDWLANKTLRT) the chain is Cytoplasmic. A helical membrane pass occupies residues 463-483 (GYFIWAMVAYGLGLLITYVAL). The Lumenal portion of the chain corresponds to 484 to 488 (NLMDG). The helical transmembrane segment at 489–509 (HGQPALLYIVPFTLGTMLTLA) threads the bilayer. The short motif at 492–494 (PAL) is the PAL element. The Cytoplasmic segment spans residues 510–540 (RKRDDLWILWTKGEPERACPHHVRLEQCSEK).

Belongs to the peptidase A22B family. In terms of processing, glycosylated. As to expression, ubiquitous.

It localises to the endosome membrane. In terms of biological role, intramembrane-cleaving aspartic protease (I-CLiP) that cleaves type II membrane signal peptides in the hydrophobic plane of the membrane. In Arabidopsis thaliana (Mouse-ear cress), this protein is Signal peptide peptidase-like 2 (SPPL2).